Reading from the N-terminus, the 572-residue chain is Arginine--tRNA ligase (572 aa).

Residues 121–131 (PNLAKEMHVGH) carry the 'HIGH' region motif.

This sequence belongs to the class-I aminoacyl-tRNA synthetase family. Monomer.

The protein resides in the cytoplasm. The enzyme catalyses tRNA(Arg) + L-arginine + ATP = L-arginyl-tRNA(Arg) + AMP + diphosphate. The chain is Arginine--tRNA ligase from Chromobacterium violaceum (strain ATCC 12472 / DSM 30191 / JCM 1249 / CCUG 213 / NBRC 12614 / NCIMB 9131 / NCTC 9757 / MK).